A 122-amino-acid polypeptide reads, in one-letter code: Large ribosomal subunit protein uL14 (122 aa).

This sequence belongs to the universal ribosomal protein uL14 family. In terms of assembly, part of the 50S ribosomal subunit. Forms a cluster with proteins L3 and L19. In the 70S ribosome, L14 and L19 interact and together make contacts with the 16S rRNA in bridges B5 and B8.

Its function is as follows. Binds to 23S rRNA. Forms part of two intersubunit bridges in the 70S ribosome. The protein is Large ribosomal subunit protein uL14 of Streptococcus uberis (strain ATCC BAA-854 / 0140J).